The following is a 496-amino-acid chain: Lysine--tRNA ligase (496 aa).

2 residues coordinate Mg(2+): E409 and E416.

This sequence belongs to the class-II aminoacyl-tRNA synthetase family. In terms of assembly, homodimer. Mg(2+) is required as a cofactor.

It localises to the cytoplasm. It carries out the reaction tRNA(Lys) + L-lysine + ATP = L-lysyl-tRNA(Lys) + AMP + diphosphate. This chain is Lysine--tRNA ligase, found in Streptococcus pneumoniae serotype 19F (strain G54).